The primary structure comprises 316 residues: Fe-S cluster assembly protein dre2 (316 aa).

Residues 1 to 128 are N-terminal SAM-like domain; the sequence is MAPRCLLIGT…KPEQEEPVSI (128 aa). Positions 129 to 208 are linker; sequence PLKFGKNKAN…EDDLITEADM (80 aa). Positions 141–177 are disordered; it reads SATNGTNGAVNPDGSVPLNLNRKRDQPEPVKPAGVGF. 4 residues coordinate [2Fe-2S] cluster: C218, C229, C232, and C234. Residues 218-234 are fe-S binding site A; that stretch reads CQPKPGKRRRACKDCTC. [4Fe-4S] cluster is bound by residues C279, C282, C290, and C293. Short sequence motifs (cx2C motif) lie at residues 279–282 and 290–293; these read CGNC and CDGC. The tract at residues 279–293 is fe-S binding site B; that stretch reads CGNCALGDAFRCDGC.

The protein belongs to the anamorsin family. Monomer. Interacts with TAH18. Interacts with MIA40. Requires [2Fe-2S] cluster as cofactor. [4Fe-4S] cluster serves as cofactor.

Its subcellular location is the cytoplasm. It is found in the mitochondrion intermembrane space. In terms of biological role, component of the cytosolic iron-sulfur (Fe-S) protein assembly (CIA) machinery required for the maturation of extramitochondrial Fe-S proteins. Part of an electron transfer chain functioning in an early step of cytosolic Fe-S biogenesis, facilitating the de novo assembly of a [4Fe-4S] cluster on the scaffold complex CFD1-NBP35. Electrons are transferred to DRE2 from NADPH via the FAD- and FMN-containing protein TAH18. TAH18-DRE2 are also required for the assembly of the diferric tyrosyl radical cofactor of ribonucleotide reductase (RNR), probably by providing electrons for reduction during radical cofactor maturation in the catalytic small subunit RNR2. The polypeptide is Fe-S cluster assembly protein dre2 (Pyrenophora tritici-repentis (strain Pt-1C-BFP) (Wheat tan spot fungus)).